Consider the following 230-residue polypeptide: Probable caffeoyl-CoA O-methyltransferase 1 (230 aa).

Residues threonine 52, aspartate 74, 76 to 77 (GV), serine 82, aspartate 100, alanine 129, aspartate 151, aspartate 153, and tyrosine 160 each bind S-adenosyl-L-methionine. Position 151 (aspartate 151) interacts with a divalent metal cation. Residues aspartate 177 and asparagine 178 each contribute to the a divalent metal cation site.

Belongs to the class I-like SAM-binding methyltransferase superfamily. Cation-dependent O-methyltransferase family. CCoAMT subfamily.

The enzyme catalyses (E)-caffeoyl-CoA + S-adenosyl-L-methionine = (E)-feruloyl-CoA + S-adenosyl-L-homocysteine + H(+). This chain is Probable caffeoyl-CoA O-methyltransferase 1 (omt5), found in Dictyostelium discoideum (Social amoeba).